Reading from the N-terminus, the 207-residue chain is ConoCAP (207 aa).

The N-terminal stretch at 1–21 (MVSLGHVLFVILLPVLLPVAA) is a signal peptide. Residues 22-48 (DDPDDQMLSQISLPSSSRSEYDDNDVS) constitute a propeptide that is removed on maturation. An intrachain disulfide couples Cys-53 to Cys-59. Gly-60 is modified (glycine amide). Residues 63–82 (HRDRSRRQERYGKRLIPVLA) constitute a propeptide that is removed on maturation. A disulfide bridge connects residues Cys-87 and Cys-92. An Asparagine amide modification is found at Asn-94. The propeptide occupies 98–160 (SLSGAGPALS…RDPAASGDLS (63 aa)). Residues 131 to 155 (ARHEQQQQLLQQREQRGLESRDPAA) are disordered. The segment covering 143–152 (REQRGLESRD) has biased composition (basic and acidic residues). A disulfide bond links Cys-165 and Cys-171. Gly-173 is subject to Glycine amide. Positions 177–207 (TLYSPWLERMNEVADDRSARNALCTRLGWRE) are excised as a propeptide.

In terms of tissue distribution, expressed by the venom duct.

The protein localises to the secreted. In terms of biological role, in contrast to other members of the CCAP family which are cardio-accelerators, conoCAP-a decreases the heart frequency in Drosophila larvae (26%), rats and zebrafish embryos. It also reduces the blood pressure in rats. It decreases systolic calcium in ventricular cardiac myocytes, indicating that it may act via impairment of intracellular calcium trafficking. Synthetic conoCAP-b decreases the heart frequency of 23% in Drosophila larvae. Its function is as follows. Synthetic conoCAP-c decreases the heart frequency of 12% in Drosophila larvae. The chain is ConoCAP (conoCAP) from Conus villepinii (Villepin's cone).